The following is a 350-amino-acid chain: Phosphate acyltransferase (350 aa).

This sequence belongs to the PlsX family. In terms of assembly, homodimer. Probably interacts with PlsY.

It is found in the cytoplasm. It catalyses the reaction a fatty acyl-[ACP] + phosphate = an acyl phosphate + holo-[ACP]. It participates in lipid metabolism; phospholipid metabolism. Its function is as follows. Catalyzes the reversible formation of acyl-phosphate (acyl-PO(4)) from acyl-[acyl-carrier-protein] (acyl-ACP). This enzyme utilizes acyl-ACP as fatty acyl donor, but not acyl-CoA. This chain is Phosphate acyltransferase, found in Magnetococcus marinus (strain ATCC BAA-1437 / JCM 17883 / MC-1).